The following is a 338-amino-acid chain: Ketol-acid reductoisomerase (NADP(+)) (338 aa).

A KARI N-terminal Rossmann domain is found at 1–181; that stretch reads MKVYYDKDAD…GGTKGGVIET (181 aa). Residues 24–27, Arg-47, and Ser-52 each bind NADP(+); that span reads YGSQ. Residue His-107 is part of the active site. Gly-133 serves as a coordination point for NADP(+). A KARI C-terminal knotted domain is found at 182–327; that stretch reads NFKEETETDL…GQLRDMMPWI (146 aa). Residues Asp-190, Glu-194, Glu-226, and Glu-230 each coordinate Mg(2+). A substrate-binding site is contributed by Ser-251.

The protein belongs to the ketol-acid reductoisomerase family. Mg(2+) is required as a cofactor.

It catalyses the reaction (2R)-2,3-dihydroxy-3-methylbutanoate + NADP(+) = (2S)-2-acetolactate + NADPH + H(+). It carries out the reaction (2R,3R)-2,3-dihydroxy-3-methylpentanoate + NADP(+) = (S)-2-ethyl-2-hydroxy-3-oxobutanoate + NADPH + H(+). Its pathway is amino-acid biosynthesis; L-isoleucine biosynthesis; L-isoleucine from 2-oxobutanoate: step 2/4. It functions in the pathway amino-acid biosynthesis; L-valine biosynthesis; L-valine from pyruvate: step 2/4. Functionally, involved in the biosynthesis of branched-chain amino acids (BCAA). Catalyzes an alkyl-migration followed by a ketol-acid reduction of (S)-2-acetolactate (S2AL) to yield (R)-2,3-dihydroxy-isovalerate. In the isomerase reaction, S2AL is rearranged via a Mg-dependent methyl migration to produce 3-hydroxy-3-methyl-2-ketobutyrate (HMKB). In the reductase reaction, this 2-ketoacid undergoes a metal-dependent reduction by NADPH to yield (R)-2,3-dihydroxy-isovalerate. This is Ketol-acid reductoisomerase (NADP(+)) from Azoarcus sp. (strain BH72).